Consider the following 121-residue polypeptide: Small ribosomal subunit protein uS12c (121 aa).

Belongs to the universal ribosomal protein uS12 family. Part of the 30S ribosomal subunit.

It is found in the plastid. The protein resides in the chloroplast. In terms of biological role, with S4 and S5 plays an important role in translational accuracy. Located at the interface of the 30S and 50S subunits. The protein is Small ribosomal subunit protein uS12c (rps12) of Bigelowiella natans (Pedinomonas minutissima).